The sequence spans 489 residues: Equilibrative nucleobase transporter 1 (489 aa).

A helical transmembrane segment spans residues 17–37 (LLECLGFAGVLFGWTSLVFVF). N-linked (GlcNAc...) asparagine glycosylation occurs at N56. The next 4 helical transmembrane spans lie at 72–92 (LIFT…GYIF), 102–122 (LIAI…SADS), 123–143 (AVLL…FLIT), and 158–180 (IITM…KLLY). Phosphoserine is present on S253. T258 carries the post-translational modification Phosphothreonine. A run of 6 helical transmembrane segments spans residues 277-297 (FAWH…FIGT), 318-338 (NAFA…GLLM), 358-380 (AAAL…GFAV), 402-422 (SFLY…EHFG), 426-446 (GLVM…FTLI), and 455-475 (LYVN…PFLV).

The protein belongs to the SLC43A transporter (TC 2.A.1.44) family.

It is found in the basolateral cell membrane. It carries out the reaction adenine(out) = adenine(in). The catalysed reaction is guanine(out) = guanine(in). It catalyses the reaction hypoxanthine(out) = hypoxanthine(in). Sodium-independent purine-selective nucleobase transporter which mediates the equilibrative transport of extracellular purine nucleobases such as adenine, guanine and hypoxanthine. May regulate fatty acid (FA) transport in adipocytes, acting as a positive regulator of FA efflux and as a negative regulator of FA uptake. The sequence is that of Equilibrative nucleobase transporter 1 (SLC43A3) from Bos taurus (Bovine).